Reading from the N-terminus, the 600-residue chain is UvrABC system protein C (600 aa).

Residues 15–100 (NSAGVYQYFN…IKQLHPKYNI (86 aa)) form the GIY-YIG domain. The UVR domain maps to 203 to 238 (SILIKNLEKQMLVLAQNENYEEAAKVRDQIVTIKDL).

Belongs to the UvrC family. In terms of assembly, interacts with UvrB in an incision complex.

The protein localises to the cytoplasm. Its function is as follows. The UvrABC repair system catalyzes the recognition and processing of DNA lesions. UvrC both incises the 5' and 3' sides of the lesion. The N-terminal half is responsible for the 3' incision and the C-terminal half is responsible for the 5' incision. In Campylobacter jejuni subsp. jejuni serotype O:23/36 (strain 81-176), this protein is UvrABC system protein C.